The sequence spans 99 residues: Large ribosomal subunit protein uL23 (99 aa).

It belongs to the universal ribosomal protein uL23 family. As to quaternary structure, part of the 50S ribosomal subunit. Contacts protein L29, and trigger factor when it is bound to the ribosome.

Functionally, one of the early assembly proteins it binds 23S rRNA. One of the proteins that surrounds the polypeptide exit tunnel on the outside of the ribosome. Forms the main docking site for trigger factor binding to the ribosome. This is Large ribosomal subunit protein uL23 from Pseudomonas aeruginosa (strain LESB58).